The chain runs to 423 residues: Glutamyl-tRNA reductase 2 (423 aa).

Substrate-binding positions include 48–51 (TCYR), Ser-103, 108–110 (EPQ), and Gln-114. Cys-49 functions as the Nucleophile in the catalytic mechanism. 183 to 188 (GAGEMA) contacts NADP(+).

The protein belongs to the glutamyl-tRNA reductase family. Homodimer.

The catalysed reaction is (S)-4-amino-5-oxopentanoate + tRNA(Glu) + NADP(+) = L-glutamyl-tRNA(Glu) + NADPH + H(+). The protein operates within porphyrin-containing compound metabolism; protoporphyrin-IX biosynthesis; 5-aminolevulinate from L-glutamyl-tRNA(Glu): step 1/2. In terms of biological role, catalyzes the NADPH-dependent reduction of glutamyl-tRNA(Glu) to glutamate 1-semialdehyde (GSA). The polypeptide is Glutamyl-tRNA reductase 2 (Anaeromyxobacter sp. (strain Fw109-5)).